A 1309-amino-acid polypeptide reads, in one-letter code: Putative receptor-type tyrosine-protein phosphatase mosPTP-1 (1309 aa).

The signal sequence occupies residues 1-36; the sequence is MNSAPRNAGAARSVDRRGFIAACGLLVLLVVRMLGA. The Extracellular portion of the chain corresponds to 37-572; sequence ADATRIFDIE…RQVYDDYNLA (536 aa). N-linked (GlcNAc...) asparagine glycans are attached at residues N60, N107, N162, N257, N353, N389, N455, N501, and N513. 4 consecutive Fibronectin type-III domains span residues 147–244, 249–347, 350–449, and 450–553; these read PPGR…TLRE, KPVT…DEGV, KPLN…SGPS, and APKV…LQLH. Residues 573-593 traverse the membrane as a helical segment; it reads VLGGIVFSCFGLLLIVLSFLL. Residues 594 to 1309 lie on the Cytoplasmic side of the membrane; sequence WKKCFHAAYY…NHLNLDHNQS (716 aa). Tyrosine-protein phosphatase domains follow at residues 656-921 and 944-1196; these read FSKE…LVEA and IDNQ…LSYM. C862 acts as the Phosphocysteine intermediate in catalysis. Residues 1239–1269 form a disordered region; sequence NSGDGGGNGNDGVPTGNGTNGGLPMSGGGTT. Gly residues predominate over residues 1256–1268; it reads GTNGGLPMSGGGT.

It belongs to the protein-tyrosine phosphatase family. Receptor class subfamily. In terms of assembly, interacts with C-type lectin mosGCTL-1; the interaction probably mediates the recruitment of West Nile virus particles in complex with C-type lectin mosGCTL-1 to the cell surface. Interacts with C-type lectin mosGCTL-7; the interaction probably mediates the recruitment of Japanese encephalitis virus particles in complex with C-type lectin mosGCTL-7 to the cell surface. As to expression, salivary gland (at protein level). Hemolymph. Low-level expression in midgut.

Its subcellular location is the cell membrane. It carries out the reaction O-phospho-L-tyrosyl-[protein] + H2O = L-tyrosyl-[protein] + phosphate. Functionally, putative protein tyrosine-protein phosphatase. Its function is as follows. (Microbial infection) Facilitates West Nile virus infection in mosquitoes probably via recruiting West Nile virus particles in complex with C-type lectin mosGCTL-1 to the cell surface. In terms of biological role, (Microbial infection) Facilitates Japanese encephalitis virus infection in mosquitoes probably via recruiting Japanese encephalitis virus particles in complex with C-type lectin mosGCTL-7 to the cell surface. The polypeptide is Putative receptor-type tyrosine-protein phosphatase mosPTP-1 (Aedes aegypti (Yellowfever mosquito)).